The chain runs to 400 residues: Cytochrome b (400 aa).

The next 4 membrane-spanning stretches (helical) occupy residues 32–52 (FGSL…TLAM), 76–98 (WLIR…LHIG), 113–133 (TWSI…LGYV), and 179–199 (FFSL…MHLI). Heme b is bound by residues H82 and H96. 2 residues coordinate heme b: H183 and H197. H202 contacts a ubiquinone. Helical transmembrane passes span 226–246 (YLFK…IFVF), 290–310 (AVGV…PYLD), 322–342 (LSKV…QLGA), and 349–369 (FIVF…IIIP).

It belongs to the cytochrome b family. In terms of assembly, fungal cytochrome b-c1 complex contains 10 subunits; 3 respiratory subunits, 2 core proteins and 5 low-molecular weight proteins. Cytochrome b-c1 complex is a homodimer. Heme b is required as a cofactor.

It localises to the mitochondrion inner membrane. Functionally, component of the ubiquinol-cytochrome c reductase complex (complex III or cytochrome b-c1 complex) that is part of the mitochondrial respiratory chain. The b-c1 complex mediates electron transfer from ubiquinol to cytochrome c. Contributes to the generation of a proton gradient across the mitochondrial membrane that is then used for ATP synthesis. This chain is Cytochrome b (cob), found in Epidermophyton floccosum.